The following is a 239-amino-acid chain: UDP-2,3-diacylglucosamine hydrolase (239 aa).

The Mn(2+) site is built by Asp9, His11, Asp42, Asn80, and His115. 80–81 (NR) contributes to the substrate binding site. Substrate contacts are provided by Asp123, Ser161, Lys165, Lys168, and His196. Mn(2+) is bound by residues His196 and His198.

Belongs to the LpxH family. The cofactor is Mn(2+).

It is found in the cell inner membrane. The enzyme catalyses UDP-2-N,3-O-bis[(3R)-3-hydroxytetradecanoyl]-alpha-D-glucosamine + H2O = 2-N,3-O-bis[(3R)-3-hydroxytetradecanoyl]-alpha-D-glucosaminyl 1-phosphate + UMP + 2 H(+). It participates in glycolipid biosynthesis; lipid IV(A) biosynthesis; lipid IV(A) from (3R)-3-hydroxytetradecanoyl-[acyl-carrier-protein] and UDP-N-acetyl-alpha-D-glucosamine: step 4/6. In terms of biological role, hydrolyzes the pyrophosphate bond of UDP-2,3-diacylglucosamine to yield 2,3-diacylglucosamine 1-phosphate (lipid X) and UMP by catalyzing the attack of water at the alpha-P atom. Involved in the biosynthesis of lipid A, a phosphorylated glycolipid that anchors the lipopolysaccharide to the outer membrane of the cell. The protein is UDP-2,3-diacylglucosamine hydrolase of Pasteurella multocida (strain Pm70).